The following is a 398-amino-acid chain: Phosphoglycerate kinase (398 aa).

Substrate-binding positions include 21-23 (DFN), Arg36, 59-62 (HFGR), Arg117, and Arg150. Residues Lys200, Glu321, and 351 to 354 (GGDS) each bind ATP.

It belongs to the phosphoglycerate kinase family. Monomer.

The protein localises to the cytoplasm. The enzyme catalyses (2R)-3-phosphoglycerate + ATP = (2R)-3-phospho-glyceroyl phosphate + ADP. It functions in the pathway carbohydrate degradation; glycolysis; pyruvate from D-glyceraldehyde 3-phosphate: step 2/5. This chain is Phosphoglycerate kinase, found in Wolbachia pipientis wMel.